The following is a 282-amino-acid chain: 2-dehydro-3-deoxyphosphooctonate aldolase (282 aa).

This sequence belongs to the KdsA family.

Its subcellular location is the cytoplasm. It carries out the reaction D-arabinose 5-phosphate + phosphoenolpyruvate + H2O = 3-deoxy-alpha-D-manno-2-octulosonate-8-phosphate + phosphate. Its pathway is carbohydrate biosynthesis; 3-deoxy-D-manno-octulosonate biosynthesis; 3-deoxy-D-manno-octulosonate from D-ribulose 5-phosphate: step 2/3. It functions in the pathway bacterial outer membrane biogenesis; lipopolysaccharide biosynthesis. The protein is 2-dehydro-3-deoxyphosphooctonate aldolase of Shewanella sp. (strain MR-4).